The sequence spans 1024 residues: Beta-galactosidase (1024 aa).

The substrate site is built by Asn103 and Asp202. Residue Asp202 coordinates Na(+). The Mg(2+) site is built by Glu417, His419, and Glu462. Residues Glu462 and 538-541 (EYAH) contribute to the substrate site. The active-site Proton donor is Glu462. Glu538 acts as the Nucleophile in catalysis. Residue Asn598 participates in Mg(2+) binding. 2 residues coordinate Na(+): Phe602 and Asn605. Substrate-binding residues include Asn605 and Trp1000.

Belongs to the glycosyl hydrolase 2 family. Homotetramer. Mg(2+) is required as a cofactor. Na(+) serves as cofactor.

The enzyme catalyses Hydrolysis of terminal non-reducing beta-D-galactose residues in beta-D-galactosides.. The sequence is that of Beta-galactosidase from Escherichia coli O9:H4 (strain HS).